Here is a 602-residue protein sequence, read N- to C-terminus: MKKIRNFAIIAHIDHGKSTLSDRFIQLCGALSSREMVNQVLDSMDIERERGITIKAQSVRLNYKALDSQLYQLNLIDTPGHVDFSYEVSRSLAACEGALLVVDASQGVEAQTLANCYTAIEMNLTVVPVINKIDLASADPNRVLQEIEDIIGIDATDIVFCSAKTGLGISNIIERIVRDIPPPKGDPTAPLQALIIDSWFDNYFGLVSLVRIQNGTLRKGDKVTVMSTGQSYNVERLGFFTPKKIDQEELKCGEVGWLVCSIKNIFGVLVGDTFTLTYQPAQQALPGFKKVKPQVYAGFFPVNANDYQSLNDALGKLRLNDASLFYEIEQSNALGFGFRCGFLGLLHMEIIQERLEREYNLNLITTAPTVIYEVITHDKNTYFIDSPSKLPSIHEIKELREPIAKCTILVPHKYLGKVINLCIEKRGVQKDIFYHGKMVTLTYEIPMAEVVIDFFDRLKSISRGYASLDYEFQFFQTSNVVRVDVLINGDRIDALTIITHRVNALYRGRELVDRLQELIPRQQFDIAIQTAIGNNIIARSTVKQLRKNVLAKCYGGDVSRKKKLLQKQKQGKKRMKLIGKIELPQEAFMSILNVKKKSNKVC.

Positions 2–184 (KKIRNFAIIA…RIVRDIPPPK (183 aa)) constitute a tr-type G domain. GTP-binding positions include 14 to 19 (DHGKST) and 131 to 134 (NKID).

It belongs to the TRAFAC class translation factor GTPase superfamily. Classic translation factor GTPase family. LepA subfamily.

It is found in the cell membrane. It catalyses the reaction GTP + H2O = GDP + phosphate + H(+). Functionally, required for accurate and efficient protein synthesis under certain stress conditions. May act as a fidelity factor of the translation reaction, by catalyzing a one-codon backward translocation of tRNAs on improperly translocated ribosomes. Back-translocation proceeds from a post-translocation (POST) complex to a pre-translocation (PRE) complex, thus giving elongation factor G a second chance to translocate the tRNAs correctly. Binds to ribosomes in a GTP-dependent manner. The polypeptide is Elongation factor 4 (Baumannia cicadellinicola subsp. Homalodisca coagulata).